Consider the following 192-residue polypeptide: Probable cobalt-precorrin-6B C(15)-methyltransferase (decarboxylating) (192 aa).

S-adenosyl-L-methionine-binding positions include threonine 20, 44-48 (GSGTG), glutamate 68, and alanine 96.

It belongs to the methyltransferase superfamily. Archaeal-type CbiT family.

It catalyses the reaction Co-precorrin-6B + S-adenosyl-L-methionine = Co-precorrin-7 + S-adenosyl-L-homocysteine + CO2. The protein operates within cofactor biosynthesis; adenosylcobalamin biosynthesis; cob(II)yrinate a,c-diamide from sirohydrochlorin (anaerobic route): step 8/10. In terms of biological role, catalyzes the methylation of C-15 in cobalt-precorrin-6B followed by the decarboxylation of C-12 to form cobalt-precorrin-7. This chain is Probable cobalt-precorrin-6B C(15)-methyltransferase (decarboxylating), found in Sulfurisphaera tokodaii (strain DSM 16993 / JCM 10545 / NBRC 100140 / 7) (Sulfolobus tokodaii).